A 406-amino-acid polypeptide reads, in one-letter code: MTFSVDKVRADFPVLSREVNGLPLAYLDSAASAQKPSQVIDAEAEFYRHGYAAVHRGIHTLSAQATEKMENVRKRASLFINARSAEELVFVRGTTEGINLVANSWGNSNVRAGDNIIISQMEHHANIVPWQMLCARVGAELRVIPLNPDGTLQLETLPTLFDEKTRLLAITHVSNVLGTENPLAEMITLAHQHGAKVLVDGAQAVMHHPVDVQALDCDFYVFSGHKLYGPTGIGILYVKEALLQEMPPWEGGGSMIATVSLSEGTTWTKAPWRFEAGTPNTGGIIGLGAALEYVSAQGLNNIAEYEQNLMHYALSQLESVPDLTLYGPQNRLGVIAFNLGKHHAYDVGSFLDNYGIAVRTGHHCAMPLMAYYNVPAMCRASLAMYNTHEEVDRLVTGLQRIHRLLG.

K226 carries the post-translational modification N6-(pyridoxal phosphate)lysine. The active-site Cysteine persulfide intermediate is C364.

The protein belongs to the class-V pyridoxal-phosphate-dependent aminotransferase family. Csd subfamily. In terms of assembly, homodimer. Interacts with SufE and the SufBCD complex composed of SufB, SufC and SufD. The interaction with SufE is required to mediate the direct transfer of the sulfur atom from the S-sulfanylcysteine. Requires pyridoxal 5'-phosphate as cofactor.

It localises to the cytoplasm. The enzyme catalyses (sulfur carrier)-H + L-cysteine = (sulfur carrier)-SH + L-alanine. It carries out the reaction L-selenocysteine + AH2 = hydrogenselenide + L-alanine + A + H(+). Its pathway is cofactor biosynthesis; iron-sulfur cluster biosynthesis. Cysteine desulfurases mobilize the sulfur from L-cysteine to yield L-alanine, an essential step in sulfur metabolism for biosynthesis of a variety of sulfur-containing biomolecules. Component of the suf operon, which is activated and required under specific conditions such as oxidative stress and iron limitation. Acts as a potent selenocysteine lyase in vitro, that mobilizes selenium from L-selenocysteine. Selenocysteine lyase activity is however unsure in vivo. The polypeptide is Cysteine desulfurase (Escherichia coli O157:H7 (strain EC4115 / EHEC)).